The primary structure comprises 121 residues: MDSFTRASLITFLILLTLTSLVFSNGCMMRGGCFKTSEDAHRLIMQVDFYICGNAIFDTFMDVCRPGPRRRKRDLRRKLGIVMDRKESHKFLRRRKRRVYDIVEECCMEGCIVEEVSEYCD.

A signal peptide spans 1–24 (MDSFTRASLITFLILLTLTSLVFS). Positions 25-45 (NGCMMRGGCFKTSEDAHRLIM) are excised as a propeptide. Disulfide bonds link Cys52–Cys107, Cys64–Cys120, and Cys106–Cys111. Residues 69-97 (RRRKRDLRRKLGIVMDRKESHKFLRRRKR) constitute a propeptide, c peptide.

Belongs to the insulin family.

It is found in the secreted. In terms of biological role, insulin decreases blood glucose concentration. May have evolved to activate insulin receptors (INSR) in vertebrates. Molecular docking studies reveals unique interaction with the human insulin receptor. In vivo, insulin-like peptide injection reduces blood glucose levels in two models of zebrafish diabetes (streptozotocin- and glucose-induced). Also shorter swimming distance of zebrafish larvae, an effect which is not observed with human insulin. This chain is Insulin-like peptide 01, found in Exaiptasia diaphana (Tropical sea anemone).